A 414-amino-acid polypeptide reads, in one-letter code: Esterase FrsA (414 aa).

Belongs to the FrsA family.

It catalyses the reaction a carboxylic ester + H2O = an alcohol + a carboxylate + H(+). Catalyzes the hydrolysis of esters. This chain is Esterase FrsA, found in Klebsiella pneumoniae (strain 342).